A 205-amino-acid polypeptide reads, in one-letter code: Transcriptional regulator GfcR (205 aa).

Belongs to the purine/pyrimidine phosphoribosyltransferase family. GfcR subfamily.

In Methanococcus maripaludis (strain C5 / ATCC BAA-1333), this protein is Transcriptional regulator GfcR.